Here is a 526-residue protein sequence, read N- to C-terminus: Keratin, type I cytoskeletal 10 (526 aa).

The segment covering 1-15 (MSVRYSSSKQYSSSR) has biased composition (low complexity). The segment at 1–29 (MSVRYSSSKQYSSSRSGGGGGGGSSLRIS) is disordered. Residues 1-126 (MSVRYSSSKQ…FGDGGLISGN (126 aa)) are head. 6 positions are modified to phosphoserine: serine 14, serine 16, serine 34, serine 45, serine 48, and serine 151. The segment at 127 to 162 (QKITMQNLNDRLASYLDKVRALEESNYELEVKIKEW) is coil 1A. One can recognise an IF rod domain in the interval 127 to 441 (QKITMQNLND…SLLEGEGSSG (315 aa)). Residues 163–183 (YEKYGNSRQREPRDYSKYYQT) form a linker 1 region. Residues 184-275 (IDDLKNQIFN…KNHEEEMRDL (92 aa)) form a coil 1B region. The tract at residues 276–298 (QNVSTGDVNVEMNAAPGVDLTEL) is linker 12. A coil 2 region spans residues 299–437 (LNNMRSQYEQ…QTYRSLLEGE (139 aa)). Positions 438–526 (GSSGGGSYGG…GESSSKGPRY (89 aa)) are tail. A compositionally biased stretch (gly residues) spans 458–505 (GGGGYGGGSSSGGYGGGSSSGGGHGGSSGGSYGGGSSSGGGHGGGSSS). Positions 458–526 (GGGGYGGGSS…GESSSKGPRY (69 aa)) are disordered. Positions 506 to 526 (GGHKSTTTGSVGESSSKGPRY) are enriched in low complexity.

This sequence belongs to the intermediate filament family. Heterotetramer of two type I and two type II keratins. Heterodimer with KRT1. Two heterodimers of KRT1 and KRT10 form a heterotetramer. The KRT10 subunit in the heterotetramer is probably disulfide-linked.

The protein localises to the secreted. It localises to the extracellular space. Its subcellular location is the cell surface. It is found in the cytoplasm. In terms of biological role, plays a role in the establishment of the epidermal barrier on plantar skin. Involved in the maintenance of cell layer development and keratin filament bundles in suprabasal cells of the epithelium. The chain is Keratin, type I cytoskeletal 10 (KRT10) from Bos taurus (Bovine).